The sequence spans 367 residues: Chorismate synthase (367 aa).

Residues F41–R60 are disordered. Residues R48 and R54 each contribute to the NADP(+) site. FMN is bound by residues R125–S127, N238–A239, G278, K293–S297, and R319.

It belongs to the chorismate synthase family. Homotetramer. FMNH2 serves as cofactor.

The catalysed reaction is 5-O-(1-carboxyvinyl)-3-phosphoshikimate = chorismate + phosphate. The protein operates within metabolic intermediate biosynthesis; chorismate biosynthesis; chorismate from D-erythrose 4-phosphate and phosphoenolpyruvate: step 7/7. Functionally, catalyzes the anti-1,4-elimination of the C-3 phosphate and the C-6 proR hydrogen from 5-enolpyruvylshikimate-3-phosphate (EPSP) to yield chorismate, which is the branch point compound that serves as the starting substrate for the three terminal pathways of aromatic amino acid biosynthesis. This reaction introduces a second double bond into the aromatic ring system. The chain is Chorismate synthase from Xanthomonas euvesicatoria pv. vesicatoria (strain 85-10) (Xanthomonas campestris pv. vesicatoria).